Consider the following 598-residue polypeptide: Peroxisomal multifunctional enzyme type 2 (598 aa).

The tract at residues 1–309 (MSSSDGKLRY…LEVLEKLKEG (309 aa)) is (3R)-hydroxyacyl-CoA dehydrogenase. Residues 16–40 (VVTGAGAGLGREYALLFAERGAKVV), Leu-24, Asp-43, 78–79 (SV), and Asn-102 each bind NAD(+). Ser-154 is a substrate binding site. Tyr-167 acts as the Proton acceptor in catalysis. NAD(+) contacts are provided by residues 167 to 171 (YTAAK) and 199 to 202 (AASR). An enoyl-CoA hydratase 2 region spans residues 310 to 598 (GGDAIEDAFE…VDLKSSQAKL (289 aa)). (3R)-3-hydroxydecanoyl-CoA is bound by residues 390 to 391 (HG), Lys-419, 496 to 501 (DKNPLH), Gly-519, and Phe-549. One can recognise a MaoC-like domain in the interval 469–586 (PAPNRQPDAT…VETGKEVISG (118 aa)). The Microbody targeting signal motif lies at 596-598 (AKL).

Belongs to the short-chain dehydrogenases/reductases (SDR) family. Homodimer.

The protein resides in the peroxisome. The catalysed reaction is a (3R)-3-hydroxyacyl-CoA + NAD(+) = a 3-oxoacyl-CoA + NADH + H(+). It carries out the reaction a (3R)-3-hydroxyacyl-CoA = a (2E)-enoyl-CoA + H2O. It functions in the pathway lipid metabolism; fatty acid beta-oxidation. Bifunctional enzyme acting on the peroxisomal beta-oxidation pathway for fatty acids. The chain is Peroxisomal multifunctional enzyme type 2 from Drosophila melanogaster (Fruit fly).